Consider the following 265-residue polypeptide: Undecaprenyl-diphosphatase (265 aa).

8 helical membrane-spanning segments follow: residues 19-39, 42-62, 80-100, 108-128, 143-163, 181-201, 220-240, and 243-263; these read FLPVSSTGHLILVGHLIGFTG, ADSFDVIIQLGAILAVVCLYW, IRGLWMLFLTSLPAGLIGLVA, LFNPWSVALALSVGAVMIFLV, MTPGLALGIGCFQCLSLWPGF, SLAAEYSFIGAVPLMFAATLY, IGFVVSFVSALIAVKAFIVLV, and ITLRPFAWYRLALAAAVFFFW.

The protein belongs to the UppP family.

Its subcellular location is the cell inner membrane. The catalysed reaction is di-trans,octa-cis-undecaprenyl diphosphate + H2O = di-trans,octa-cis-undecaprenyl phosphate + phosphate + H(+). Catalyzes the dephosphorylation of undecaprenyl diphosphate (UPP). Confers resistance to bacitracin. In Solidesulfovibrio magneticus (strain ATCC 700980 / DSM 13731 / RS-1) (Desulfovibrio magneticus), this protein is Undecaprenyl-diphosphatase.